Consider the following 119-residue polypeptide: Small ribosomal subunit protein eS25 (119 aa).

The interval 1–42 (MPPKKDTKASAKQPQKTQKKKEGSGGGKAKKKKWSKGKVRDK) is disordered. Residues 28–37 (KAKKKKWSKG) show a composition bias toward basic residues.

It belongs to the eukaryotic ribosomal protein eS25 family.

The chain is Small ribosomal subunit protein eS25 (RpS25) from Spodoptera frugiperda (Fall armyworm).